Here is a 149-residue protein sequence, read N- to C-terminus: Large ribosomal subunit protein bL9 (149 aa).

Belongs to the bacterial ribosomal protein bL9 family.

In terms of biological role, binds to the 23S rRNA. In Edwardsiella ictaluri (strain 93-146), this protein is Large ribosomal subunit protein bL9.